The primary structure comprises 215 residues: Ras-related protein Rab-5A (215 aa).

10 residues coordinate GTP: Ser29, Ala30, Gly32, Lys33, Ser34, Ser35, His46, Glu47, Thr52, and Gly78. Ser34 contributes to the Mg(2+) binding site. 2 consecutive short sequence motifs (switch) follow at residues Gln44–Ala56 and Ala77–Ala93. Thr52 lines the Mg(2+) pocket. Ser84 carries the post-translational modification Phosphoserine. Residues Asn133, Lys134, Asp136, Ala164, and Lys165 each coordinate GTP. The segment at Glu185–Asn215 is disordered. The segment covering Glu203 to Asn215 has biased composition (polar residues). Residues Cys212 and Cys213 are each lipidated (S-geranylgeranyl cysteine).

Belongs to the small GTPase superfamily. Rab family. As to quaternary structure, interacts with GDI1; this promotes dissociation from membranes; phosphorylation at Ser-84 disrupts this interaction. Interacts with GDI2; phosphorylation at Ser-84 disrupts the interaction. Interacts with SGSM1 and SGSM3. Interacts with PIK3CB. Interacts with RIN1 and GAPVD1, which regulate its pathway, probably by acting as a GEF. Interacts with RINL. Interacts with ALS2CL, SUN2, ZFYVE20 and RUFY1. Interacts with RABEP1; one RABEP1 homodimer binds two RAB5A chains, but at opposite sides of the dimer. Interacts with OCRL and INPP5F. May be a component of a complex composed of RAB5A, DYN2 and PIK3C3. Does not interact with the BLOC-3 complex (heterodimer of HPS1 and HPS4). Interacts with CLN5. Interacts with APPL2. Interacts with F8A1/F8A2/F8A3. Found in a complex with F8A1/F8A2/F8A3, HTT and RAB5A; mediates the recruitment of HTT by RAB5A onto early endosomes. Interacts with ATP9A. Interacts with PPP1R21; mediates the recruitment of FERRY complex by RAB5A onto early endosomes. It depends on Mg(2+) as a cofactor. In terms of processing, phosphorylation of Ser-84 in the switch II region by LRRK2 prevents the association of RAB regulatory proteins, including RAB GDP dissociation inhibitors GDI1 and GDI2.

It is found in the cell membrane. Its subcellular location is the early endosome membrane. It localises to the melanosome. The protein localises to the cytoplasmic vesicle. The protein resides in the cell projection. It is found in the ruffle. Its subcellular location is the membrane. It localises to the cytoplasm. The protein localises to the cytosol. The protein resides in the phagosome membrane. It is found in the endosome membrane. The catalysed reaction is GTP + H2O = GDP + phosphate + H(+). Its activity is regulated as follows. Regulated by guanine nucleotide exchange factors (GEFs) including RINL, which promote the exchange of bound GDP for free GTP. Regulated by GTPase activating proteins (GAPs) which increase the GTP hydrolysis activity. Inhibited by GDP dissociation inhibitors (GDIs). Functionally, the small GTPases Rab are key regulators of intracellular membrane trafficking, from the formation of transport vesicles to their fusion with membranes. Rabs cycle between an inactive GDP-bound form and an active GTP-bound form that is able to recruit to membranes different sets of downstream effectors directly responsible for vesicle formation, movement, tethering and fusion. RAB5A is required for the fusion of plasma membranes and early endosomes. Contributes to the regulation of filopodia extension. Required for the exosomal release of SDCBP, CD63, PDCD6IP and syndecan. Regulates maturation of apoptotic cell-containing phagosomes, probably downstream of DYN2 and PIK3C3. This Sus scrofa (Pig) protein is Ras-related protein Rab-5A (RAB5A).